Reading from the N-terminus, the 61-residue chain is Small ribosomal subunit protein uS14 (61 aa).

Zn(2+)-binding residues include Cys-24, Cys-27, Cys-40, and Cys-43.

Belongs to the universal ribosomal protein uS14 family. Zinc-binding uS14 subfamily. Part of the 30S ribosomal subunit. Contacts proteins S3 and S10. It depends on Zn(2+) as a cofactor.

Binds 16S rRNA, required for the assembly of 30S particles and may also be responsible for determining the conformation of the 16S rRNA at the A site. The protein is Small ribosomal subunit protein uS14 of Sulfurimonas denitrificans (strain ATCC 33889 / DSM 1251) (Thiomicrospira denitrificans (strain ATCC 33889 / DSM 1251)).